We begin with the raw amino-acid sequence, 661 residues long: Kyphoscoliosis peptidase (661 aa).

A compositionally biased stretch (polar residues) spans 28–41 (GTLSDQQANPSSLL). 2 disordered regions span residues 28 to 47 (GTLS…GGGF) and 115 to 136 (QGDK…HAYP). Residues cysteine 225, histidine 267, and aspartate 282 contribute to the active site.

The protein belongs to the transglutaminase-like superfamily. As to quaternary structure, interacts with IGFN1 and FLNC. As to expression, highly expressed in skeletal muscle.

The protein localises to the cytoplasm. Its subcellular location is the cytoskeleton. The protein resides in the myofibril. It localises to the sarcomere. It is found in the z line. Probable cytoskeleton-associated protease required for normal muscle growth. Involved in function, maturation and stabilization of the neuromuscular junction. May act by cleaving muscle-specific proteins such as FLNC. The chain is Kyphoscoliosis peptidase from Homo sapiens (Human).